We begin with the raw amino-acid sequence, 229 residues long: Cytidylate kinase (229 aa).

12–20 (GPSGAGKGT) contacts ATP.

The protein belongs to the cytidylate kinase family. Type 1 subfamily.

It is found in the cytoplasm. It carries out the reaction CMP + ATP = CDP + ADP. The catalysed reaction is dCMP + ATP = dCDP + ADP. This is Cytidylate kinase from Serratia proteamaculans (strain 568).